We begin with the raw amino-acid sequence, 353 residues long: Photosystem II protein D1 (353 aa).

Thr2 is modified (N-acetylthreonine). Thr2 carries the phosphothreonine modification. 3 helical membrane passes run 29 to 46 (YIGW…TATS), 118 to 133 (HFLL…EWEL), and 142 to 156 (WIAV…AATA). Residue His118 participates in chlorophyll a binding. A pheophytin a-binding site is contributed by Tyr126. [CaMn4O5] cluster is bound by residues Asp170 and Glu189. The chain crosses the membrane as a helical span at residues 197-218 (FHMLGVAGVFGGSLFSAMHGSL). Residue His198 participates in chlorophyll a binding. A quinone contacts are provided by residues His215 and 264–265 (SF). His215 is a binding site for Fe cation. Position 272 (His272) interacts with Fe cation. Residues 274–288 (FLAAWPVVGIWFTAL) traverse the membrane as a helical segment. [CaMn4O5] cluster-binding residues include His332, Glu333, Asp342, and Ala344. A propeptide spanning residues 345-353 (AVEVPAING) is cleaved from the precursor.

Belongs to the reaction center PufL/M/PsbA/D family. In terms of assembly, PSII is composed of 1 copy each of membrane proteins PsbA, PsbB, PsbC, PsbD, PsbE, PsbF, PsbH, PsbI, PsbJ, PsbK, PsbL, PsbM, PsbT, PsbX, PsbY, PsbZ, Psb30/Ycf12, at least 3 peripheral proteins of the oxygen-evolving complex and a large number of cofactors. It forms dimeric complexes. The D1/D2 heterodimer binds P680, chlorophylls that are the primary electron donor of PSII, and subsequent electron acceptors. It shares a non-heme iron and each subunit binds pheophytin, quinone, additional chlorophylls, carotenoids and lipids. D1 provides most of the ligands for the Mn4-Ca-O5 cluster of the oxygen-evolving complex (OEC). There is also a Cl(-1) ion associated with D1 and D2, which is required for oxygen evolution. The PSII complex binds additional chlorophylls, carotenoids and specific lipids. is required as a cofactor. Tyr-161 forms a radical intermediate that is referred to as redox-active TyrZ, YZ or Y-Z. Post-translationally, C-terminally processed by CTPA; processing is essential to allow assembly of the oxygen-evolving complex and thus photosynthetic growth.

The protein resides in the plastid. Its subcellular location is the chloroplast thylakoid membrane. It carries out the reaction 2 a plastoquinone + 4 hnu + 2 H2O = 2 a plastoquinol + O2. Functionally, photosystem II (PSII) is a light-driven water:plastoquinone oxidoreductase that uses light energy to abstract electrons from H(2)O, generating O(2) and a proton gradient subsequently used for ATP formation. It consists of a core antenna complex that captures photons, and an electron transfer chain that converts photonic excitation into a charge separation. The D1/D2 (PsbA/PsbD) reaction center heterodimer binds P680, the primary electron donor of PSII as well as several subsequent electron acceptors. This Hordeum vulgare (Barley) protein is Photosystem II protein D1.